A 361-amino-acid chain; its full sequence is Velvet complex subunit B (361 aa).

Residues 1-336 (MIVRTEDQKL…GNQGQKLPLR (336 aa)) enclose the Velvet domain. Disordered stretches follow at residues 42–222 (PSST…NNIP) and 327–361 (GNQG…EDDS). 2 stretches are compositionally biased toward low complexity: residues 57-74 (PSAS…SRPP) and 93-107 (PPSS…SQSQ). The segment covering 108–127 (DNLTPSSPYPPHSNSEQPQT) has biased composition (polar residues). Over residues 130 to 147 (YPPPPPIDRAAPFPPPVL) the composition is skewed to pro residues. Polar residues-rich tracts occupy residues 149-168 (SIQS…NNDD), 181-196 (GYTN…YGSG), and 212-222 (SGNATPQNNIP). The segment covering 335–349 (LRNRHGTGSKRRRRN) has biased composition (basic residues).

Belongs to the velvet family. VelB subfamily. In terms of assembly, component of the heterotrimeric velvet complex composed of laeA, veA and velB; VeA acting as a bridging protein between laeA and velB. Forms a heterodimeric complex with vosA; the formation of the velB-vosA complex is light-dependent.

It localises to the nucleus. Its subcellular location is the cytoplasm. Its function is as follows. Component of the velvet transcription factor complex that controls sexual/asexual developmental ratio in response to light, promoting sexual development in the darkness while stimulating asexual sporulation under illumination. The velvet complex acts as a global regulator for secondary metabolite gene expression. Component of the velB-VosA heterodimeric complex that plays a dual role in activating genes associated with spore maturation and repressing certain development-associated genes. The velB-VosA complex binds DNA through the DNA-binding domain of vosA that recognizes an 11-nucleotide consensus sequence 5'-CTGGCCGCGGC-3' consisting of two motifs in the promoters of key developmental regulatory genes. The sequence is that of Velvet complex subunit B from Coprinopsis cinerea (strain Okayama-7 / 130 / ATCC MYA-4618 / FGSC 9003) (Inky cap fungus).